The sequence spans 85 residues: Large ribosomal subunit protein bL27 (85 aa).

Gly residues predominate over residues 1–10 (MAQKKGGGST). The interval 1–21 (MAQKKGGGSTRNGRDSQPKML) is disordered.

This sequence belongs to the bacterial ribosomal protein bL27 family.

The sequence is that of Large ribosomal subunit protein bL27 from Polaromonas naphthalenivorans (strain CJ2).